A 188-amino-acid polypeptide reads, in one-letter code: uncharacterized protein (188 aa).

The N-terminal stretch at 1-18 (MTLRIIAHLLALTASLAG) is a signal peptide. The N-palmitoyl cysteine moiety is linked to residue C19. The S-diacylglycerol cysteine moiety is linked to residue C19.

It localises to the cell membrane. This is an uncharacterized protein from Sinorhizobium fredii (strain NBRC 101917 / NGR234).